Consider the following 621-residue polypeptide: Chaperone protein HtpG (621 aa).

The interval 1–328 is a; substrate-binding; it reads MIQEKKKFDA…SEDLPLNISR (328 aa). Residues 329 to 544 are b; it reads ESLQHNSVLE…DAAMDIRMER (216 aa). The tract at residues 475–494 is disordered; the sequence is SDIDVEQTTSQSEAKNTDSK. Residues 545–621 are c; that stretch reads FLIEQKQIAN…LNDIVQKAIL (77 aa).

The protein belongs to the heat shock protein 90 family. As to quaternary structure, homodimer.

The protein localises to the cytoplasm. Its function is as follows. Molecular chaperone. Has ATPase activity. The polypeptide is Chaperone protein HtpG (Rickettsia rickettsii (strain Iowa)).